A 134-amino-acid polypeptide reads, in one-letter code: uncharacterized protein (134 aa).

Helical transmembrane passes span 9–29 (PYFLAFLRIVVAYMFILHGTA), 49–69 (MLLVAGVIEIVGSILLILGLF), and 107–127 (ALLYSLLFLYFVFSGAGACAL).

Belongs to the DoxX family.

It is found in the cell membrane. This is an uncharacterized protein from Haemophilus influenzae (strain ATCC 51907 / DSM 11121 / KW20 / Rd).